Reading from the N-terminus, the 360-residue chain is Phospho-N-acetylmuramoyl-pentapeptide-transferase (360 aa).

Transmembrane regions (helical) follow at residues 18 to 38 (VFSY…FLSL), 72 to 92 (PTMG…MWAY), 94 to 114 (SNPY…VGFV), 132 to 152 (WKYF…YAVG), 168 to 188 (IMPQ…VGTS), 199 to 219 (GLAI…AWAT), 236 to 256 (AGEL…FLWF), 263 to 283 (VFMG…IAVL), 288 to 308 (FLLL…ILQV), and 338 to 358 (VIVR…ATLK).

Belongs to the glycosyltransferase 4 family. MraY subfamily. Mg(2+) is required as a cofactor.

The protein resides in the cell inner membrane. The catalysed reaction is UDP-N-acetyl-alpha-D-muramoyl-L-alanyl-gamma-D-glutamyl-meso-2,6-diaminopimeloyl-D-alanyl-D-alanine + di-trans,octa-cis-undecaprenyl phosphate = di-trans,octa-cis-undecaprenyl diphospho-N-acetyl-alpha-D-muramoyl-L-alanyl-D-glutamyl-meso-2,6-diaminopimeloyl-D-alanyl-D-alanine + UMP. It participates in cell wall biogenesis; peptidoglycan biosynthesis. Its function is as follows. Catalyzes the initial step of the lipid cycle reactions in the biosynthesis of the cell wall peptidoglycan: transfers peptidoglycan precursor phospho-MurNAc-pentapeptide from UDP-MurNAc-pentapeptide onto the lipid carrier undecaprenyl phosphate, yielding undecaprenyl-pyrophosphoryl-MurNAc-pentapeptide, known as lipid I. The polypeptide is Phospho-N-acetylmuramoyl-pentapeptide-transferase (Serratia proteamaculans (strain 568)).